The following is an 860-amino-acid chain: Ubiquitin fusion degradation protein 3 homolog (860 aa).

WD repeat units lie at residues alanine 27–threonine 65, proline 71–isoleucine 112, glutamate 115–phenylalanine 154, glycine 163–lysine 203, glycine 204–lysine 242, and alanine 244–leucine 283. One can recognise a PFU domain in the interval proline 397–alanine 497. The tract at residues alanine 494–glycine 585 is disordered. Residues proline 586–methionine 856 form the PUL domain.

This sequence belongs to the WD repeat PLAP family. Interacts with cdc-48.1. Expressed in intestine (at protein level).

It localises to the cytoplasm. Functionally, plays a role in protein ubiquitination, sorting and degradation through its association with cdc-48.1 and/or cdc-48.2. The protein is Ubiquitin fusion degradation protein 3 homolog of Caenorhabditis elegans.